An 838-amino-acid chain; its full sequence is Leucine--tRNA ligase 1 (838 aa).

The 'HIGH' region signature appears at 40-51 (PYPSGAGLHVGH). Positions 608–612 (KMSKS) match the 'KMSKS' region motif. Position 611 (Lys-611) interacts with ATP.

It belongs to the class-I aminoacyl-tRNA synthetase family.

It localises to the cytoplasm. The catalysed reaction is tRNA(Leu) + L-leucine + ATP = L-leucyl-tRNA(Leu) + AMP + diphosphate. This chain is Leucine--tRNA ligase 1, found in Rhizobium johnstonii (strain DSM 114642 / LMG 32736 / 3841) (Rhizobium leguminosarum bv. viciae).